A 1056-amino-acid chain; its full sequence is RNA cytidine acetyltransferase (1056 aa).

Residue 286-295 (GRGKSAALGI) participates in ATP binding. Over residues 433–446 (QNNTSGRESTQTAV) the composition is skewed to polar residues. The segment at 433–463 (QNNTSGRESTQTAVVSRDNKEKDSHLHSQSR) is disordered. Over residues 449–463 (RDNKEKDSHLHSQSR) the composition is skewed to basic and acidic residues. Residue Arg-475 coordinates ATP. In terms of domain architecture, N-acetyltransferase spans 566–706 (VLLPPIDPKD…VKLRDAKTLP (141 aa)). Acetyl-CoA is bound by residues 638–640 (IAT), 645–651 (ASMGYGS), and Asn-739. Phosphoserine is present on residues Ser-1001, Ser-1007, and Ser-1010.

It belongs to the RNA cytidine acetyltransferase family. NAT10 subfamily. Interacts with TAN1. Associates with 90S pre-ribosomal particles.

The protein resides in the nucleus. It localises to the nucleolus. The catalysed reaction is a cytidine in 18S rRNA + acetyl-CoA + ATP + H2O = an N(4)-acetylcytidine in 18S rRNA + ADP + phosphate + CoA + H(+). The enzyme catalyses a cytidine in tRNA + acetyl-CoA + ATP + H2O = an N(4)-acetylcytidine in tRNA + ADP + phosphate + CoA + H(+). RNA cytidine acetyltransferase with specificity toward both 18S rRNA and tRNAs. Catalyzes the formation of N(4)-acetylcytidine (ac4C) at positions 1280 and 1773 in 18S rRNA. Required for early nucleolar cleavages of precursor rRNA at sites A0, A1 and A2 during 18S rRNA synthesis. Catalyzes the formation of ac4C at position 12 in serine and leucine tRNAs. Requires the tRNA-binding adapter protein TAN1 for full tRNA acetyltransferase activity but not for 18S rRNA acetylation. This chain is RNA cytidine acetyltransferase, found in Saccharomyces cerevisiae (strain ATCC 204508 / S288c) (Baker's yeast).